The primary structure comprises 135 residues: Photosystem II extrinsic protein V (135 aa).

Positions 37, 40, 41, and 92 each coordinate heme c.

The protein belongs to the cytochrome c family. PsbV subfamily. As to quaternary structure, PSII is composed of 1 copy each of membrane proteins PsbA, PsbB, PsbC, PsbD, PsbE, PsbF, PsbH, PsbI, PsbJ, PsbK, PsbL, PsbM, PsbT, PsbX, PsbY, PsbZ, Psb30/Ycf12, peripheral proteins PsbO, CyanoQ (PsbQ), PsbU, PsbV and a large number of cofactors. It forms dimeric complexes. Requires heme c as cofactor.

The protein localises to the cellular thylakoid membrane. Functionally, one of the extrinsic, lumenal subunits of photosystem II (PSII). PSII is a light-driven water plastoquinone oxidoreductase, using light energy to abstract electrons from H(2)O, generating a proton gradient subsequently used for ATP formation. The extrinsic proteins stabilize the structure of photosystem II oxygen-evolving complex (OEC), the ion environment of oxygen evolution and protect the OEC against heat-induced inactivation. Low-potential cytochrome c that plays a role in the OEC of PSII. The protein is Photosystem II extrinsic protein V of Microcystis aeruginosa.